A 92-amino-acid chain; its full sequence is Small ribosomal subunit protein uS19 (92 aa).

Belongs to the universal ribosomal protein uS19 family.

In terms of biological role, protein S19 forms a complex with S13 that binds strongly to the 16S ribosomal RNA. This Legionella pneumophila (strain Paris) protein is Small ribosomal subunit protein uS19.